Consider the following 28-residue polypeptide: Dermaseptin-H2 (28 aa).

It belongs to the frog skin active peptide (FSAP) family. Dermaseptin subfamily. Expressed by the skin glands.

It localises to the secreted. In terms of biological role, possesses a potent antimicrobial activity against Gram-positive and Gram-negative bacteria. Probably acts by disturbing membrane functions with its amphipathic structure. In Pithecopus azureus (Orange-legged monkey tree frog), this protein is Dermaseptin-H2.